The following is a 139-amino-acid chain: Small ribosomal subunit protein bS16 (139 aa).

Positions 84-139 are disordered; that stretch reads KGEPAPAPLLQPAEKAARPSFEAIGGEDEGKGEAITQKKKADKRDEAAAESSASEA.

It belongs to the bacterial ribosomal protein bS16 family.

This Streptomyces lividans protein is Small ribosomal subunit protein bS16.